A 3142-amino-acid polypeptide reads, in one-letter code: Huntingtin (3142 aa).

Positions 3 to 13 are sufficient for interaction with TPR; the sequence is TLEKLMKAFES. Lysine 9 is subject to N6-acetyllysine. The tract at residues 14 to 85 is disordered; sequence LKSFQQQQQQ…PGPAVAEEPL (72 aa). Over residues 18 to 37 the composition is skewed to low complexity; sequence QQQQQQQQQQQQQQQQQQQQ. Pro residues predominate over residues 38–78; sequence QPPPPPPPPPPPQLPQPPPQAQPLLPQPQPPPPPPPPPPGP. N6-acetyllysine occurs at positions 176 and 234. HEAT repeat units follow at residues 204 to 241, 246 to 283, and 316 to 360; these read PYLV…SFGN, NEIK…HSRR, and LTLR…VYEL. An N6-acetyllysine modification is found at lysine 343. Residues serine 411, serine 417, serine 419, and serine 432 each carry the phosphoserine modification. Lysine 442 carries the post-translational modification N6-acetyllysine. The segment at 447–469 is disordered; the sequence is EEEALEDDSESRSDVSSSALTAS. The interaction with ZDHHC17 stretch occupies residues 491-502; that stretch reads GHDIITEQPRSQ. The tract at residues 517–583 is disordered; sequence LTSSATDGDE…TPSDSSEIVL (67 aa). Over residues 531–545 the composition is skewed to low complexity; the sequence is SHSSSQVSAVPSDPA. Residues 550–579 show a composition bias toward polar residues; that stretch reads DGTQASSPISDSSQTTTEGPDSAVTPSDSS. A lipid anchor (N-myristoyl glycine) is attached at glycine 551. Residues serine 640 and serine 643 each carry the phosphoserine modification. HEAT repeat units follow at residues 802–839 and 902–940; these read FSLA…SLCS and KLQE…KLFY. A disordered region spans residues 1176–1225; the sequence is PSLSPIRRKGKEKEPGEQASVPLSPKKGSEASAASRQSDTSGPVTTSKSS. 2 positions are modified to phosphoserine; by CDK5: serine 1179 and serine 1199. A compositionally biased stretch (polar residues) spans 1207-1225; that stretch reads SAASRQSDTSGPVTTSKSS. A phosphoserine mark is found at serine 1870 and serine 1874. The segment at 2330 to 2351 is disordered; sequence ERRTNTPKAISEEEEEVDPNTQ. The Nuclear export signal motif lies at 2395 to 2404; the sequence is IIISLARLPL. The interval 2633–2662 is disordered; that stretch reads EEEWDEEEEEEADAPAPSSPPTSPVNSRKH. Residues 2634–2645 show a composition bias toward acidic residues; it reads EEWDEEEEEEAD.

Belongs to the huntingtin family. Interacts with PFN1. Interacts through its N-terminus with PRPF40A. Interacts with PQBP1. Interacts with SETD2. Interacts with SH3GLB1. Interacts with SYVN. Interacts with TPR; the interaction is inhibited by forms of Huntingtin with expanded polyglutamine stretch. Interacts with ZDHHC13 (via ANK repeats). Interacts with ZDHHC17 (via ANK repeats). Interacts with F8A1/F8A2/F8A3. Found in a complex with F8A1/F8A2/F8A3, HTT and RAB5A; mediates the recruitment of HTT by RAB5A. Cleaved by caspases downstream of the polyglutamine stretch. The resulting N-terminal fragments are cytotoxic and provokes apoptosis. In terms of processing, forms with expanded polyglutamine expansion are specifically ubiquitinated by SYVN1, which promotes their proteasomal degradation. Post-translationally, phosphorylation at Ser-1179 and Ser-1199 by CDK5 in response to DNA damage in nuclei of neurons protects neurons against polyglutamine expansion as well as DNA damage mediated toxicity. Myristoylated at Gly-551, following proteolytic cleavage at Asp-550. Expressed in the brain cortex (at protein level). Widely expressed with the highest level of expression in the brain (nerve fibers, varicosities, and nerve endings). In the brain, the regions where it can be mainly found are the cerebellar cortex, the neocortex, the striatum, and the hippocampal formation.

It localises to the cytoplasm. The protein localises to the nucleus. Its subcellular location is the early endosome. It is found in the cytoplasmic vesicle. The protein resides in the autophagosome. Functionally, may play a role in microtubule-mediated transport or vesicle function. Its function is as follows. Promotes the formation of autophagic vesicles. The chain is Huntingtin (HTT) from Homo sapiens (Human).